The primary structure comprises 517 residues: GMP synthase [glutamine-hydrolyzing] (517 aa).

The 191-residue stretch at 9–199 (RILILDFGSQ…VLNACGCEGL (191 aa)) folds into the Glutamine amidotransferase type-1 domain. C86 (nucleophile) is an active-site residue. Active-site residues include H173 and E175. In terms of domain architecture, GMPS ATP-PPase spans 200 to 392 (WTSASIIEDA…LGLPYNMLYR (193 aa)). ATP is bound at residue 227–233 (SGGVDSS).

In terms of assembly, homodimer.

The enzyme catalyses XMP + L-glutamine + ATP + H2O = GMP + L-glutamate + AMP + diphosphate + 2 H(+). It participates in purine metabolism; GMP biosynthesis; GMP from XMP (L-Gln route): step 1/1. In terms of biological role, catalyzes the synthesis of GMP from XMP. This Vibrio atlanticus (strain LGP32) (Vibrio splendidus (strain Mel32)) protein is GMP synthase [glutamine-hydrolyzing].